A 119-amino-acid chain; its full sequence is Insulin growth factor-like family member 2 (119 aa).

The first 25 residues, 1–25, serve as a signal peptide directing secretion; that stretch reads MVPRIFAPAYVSVCLLLLCPREVIA.

It belongs to the IGFL family. In terms of tissue distribution, detected in cerebellum, heart, placenta, spleen, stomach, testis and thymus.

The protein localises to the secreted. Potential ligand of the IGFLR1 cell membrane receptor. The protein is Insulin growth factor-like family member 2 (IGFL2) of Homo sapiens (Human).